The primary structure comprises 275 residues: NADPH-dependent 7-cyano-7-deazaguanine reductase (275 aa).

A substrate-binding site is contributed by 81-83 (IES). 83 to 84 (SK) lines the NADPH pocket. C181 acts as the Thioimide intermediate in catalysis. The active-site Proton donor is D188. 220-221 (HE) contributes to the substrate binding site. NADPH is bound at residue 249–250 (RG).

This sequence belongs to the GTP cyclohydrolase I family. QueF type 2 subfamily. As to quaternary structure, homodimer.

The protein localises to the cytoplasm. The catalysed reaction is 7-aminomethyl-7-carbaguanine + 2 NADP(+) = 7-cyano-7-deazaguanine + 2 NADPH + 3 H(+). It functions in the pathway tRNA modification; tRNA-queuosine biosynthesis. Functionally, catalyzes the NADPH-dependent reduction of 7-cyano-7-deazaguanine (preQ0) to 7-aminomethyl-7-deazaguanine (preQ1). In Xylella fastidiosa (strain 9a5c), this protein is NADPH-dependent 7-cyano-7-deazaguanine reductase.